Consider the following 483-residue polypeptide: Keratin, type II cytoskeletal 8 (483 aa).

Residues 1 to 16 (MSIRVTQKSYKVSTSG) show a composition bias toward polar residues. The interval 1–41 (MSIRVTQKSYKVSTSGPRAFSSRSYTSGPGSRISSSSFSRV) is disordered. The head stretch occupies residues 1–90 (MSIRVTQKSY…DPNIQAVRTQ (90 aa)). A Phosphoserine; by PKC/PRKCE modification is found at S9. K11 is covalently cross-linked (Glycyl lysine isopeptide (Lys-Gly) (interchain with G-Cter in SUMO2)). S13, S15, S21, and S22 each carry phosphoserine. The residue at position 23 (R23) is an Omega-N-methylarginine. S24 is modified (phosphoserine; by PKC/PRKCE). Residues 24–41 (SYTSGPGSRISSSSFSRV) are compositionally biased toward low complexity. Position 26 is a phosphothreonine (T26). Residues S27 and S31 each carry the phosphoserine modification. The residue at position 32 (R32) is an Omega-N-methylarginine. Phosphoserine occurs at positions 34, 37, and 39. R40 is modified (omega-N-methylarginine). S43 and S44 each carry phosphoserine. At R47 the chain carries Asymmetric dimethylarginine; alternate. Residue R47 is modified to Omega-N-methylarginine; alternate. Position 74 is a phosphoserine; by MAPK (S74). The coil 1A stretch occupies residues 91-126 (EKEQIKTLNNKFASFIDKVRFLEQQNKMLETKWSLL). The IF rod domain occupies 91–402 (EKEQIKTLNN…KLLEGEESRL (312 aa)). An N6-malonyllysine modification is found at K101. Residues K122 and K130 each participate in a glycyl lysine isopeptide (Lys-Gly) (interchain with G-Cter in SUMO2) cross-link. The interval 127–143 (QQQKTARSNMDNMFESY) is linker 1. Positions 144 to 235 (INNLRRQLET…QLYEEEIREL (92 aa)) are coil 1B. K197 participates in a covalent cross-link: Glycyl lysine isopeptide (Lys-Gly) (interchain with G-Cter in SUMO1); alternate. K197 participates in a covalent cross-link: Glycyl lysine isopeptide (Lys-Gly) (interchain with G-Cter in SUMO2); alternate. Position 207 is an N6-acetyllysine (K207). Phosphotyrosine is present on Y228. The linker 12 stretch occupies residues 236–259 (QSQISDTSVVLSMDNSRSLDMDSI). S253 and S258 each carry phosphoserine. The tract at residues 260 to 398 (IAEVKAQYED…ATYRKLLEGE (139 aa)) is coil 2. The segment at 261 to 382 (AEVKAQYEDI…EYQELMNVKL (122 aa)) is necessary for interaction with PNN. K264 participates in a covalent cross-link: Glycyl lysine isopeptide (Lys-Gly) (interchain with G-Cter in SUMO2). S274 bears the Phosphoserine mark. Residue K285 forms a Glycyl lysine isopeptide (Lys-Gly) (interchain with G-Cter in SUMO2) linkage. At S291 the chain carries Phosphoserine. K295 participates in a covalent cross-link: Glycyl lysine isopeptide (Lys-Gly) (interchain with G-Cter in SUMO2); alternate. K295 is modified (N6-acetyllysine; alternate). A Glycyl lysine isopeptide (Lys-Gly) (interchain with G-Cter in SUMO2) cross-link involves residue K304. K325 participates in a covalent cross-link: Glycyl lysine isopeptide (Lys-Gly) (interchain with G-Cter in SUMO2); alternate. K325 carries the N6-acetyllysine; alternate modification. S330 is subject to Phosphoserine. K393 is covalently cross-linked (Glycyl lysine isopeptide (Lys-Gly) (interchain with G-Cter in SUMO2)). A tail region spans residues 399-483 (ESRLESGMQN…VSESSDVLPK (85 aa)). S400, S404, S410, S417, and S424 each carry phosphoserine. S432 carries the phosphoserine; by CaMK2 and MAPK modification. Residue K472 forms a Glycyl lysine isopeptide (Lys-Gly) (interchain with G-Cter in SUMO1); alternate linkage. A Glycyl lysine isopeptide (Lys-Gly) (interchain with G-Cter in SUMO2); alternate cross-link involves residue K472. 3 positions are modified to phosphoserine: S475, S477, and S478.

This sequence belongs to the intermediate filament family. As to quaternary structure, heterotetramer of two type I and two type II keratins. Forms a heterodimer with KRT18. Associates with KRT20. Interacts with PLEC isoform 1C, when in a heterodimer with KRT18. Interacts with PNN. When associated with KRT19, interacts with DMD. Interacts with TCHP. Interacts with APEX1. Interacts with GPER1. Interacts with EPPK1. Interacts with PKP1 and PKP2. In terms of assembly, (Microbial infection) Interacts with hepatitis C virus/HCV core protein. Post-translationally, phosphorylation on serine residues is enhanced during EGF stimulation and mitosis. Ser-74 phosphorylation plays an important role in keratin filament reorganization. O-glycosylated. O-GlcNAcylation at multiple sites increases solubility, and decreases stability by inducing proteasomal degradation. In terms of processing, O-glycosylated (O-GlcNAcylated), in a cell cycle-dependent manner. In terms of tissue distribution, observed in muscle fibers accumulating in the costameres of myoplasm at the sarcolemma membrane in structures that contain dystrophin and spectrin. Expressed in gingival mucosa and hard palate of the oral cavity.

It localises to the cytoplasm. The protein localises to the nucleus. Its subcellular location is the nucleoplasm. The protein resides in the nucleus matrix. Functionally, together with KRT19, helps to link the contractile apparatus to dystrophin at the costameres of striated muscle. The chain is Keratin, type II cytoskeletal 8 (KRT8) from Homo sapiens (Human).